The primary structure comprises 317 residues: Melanocyte-stimulating hormone receptor (317 aa).

The Extracellular segment spans residues 1–37 (MPVLGSQRRLLGSLNCTPPATFPLTLAPNRTGPQCLE). The N-linked (GlcNAc...) asparagine glycan is linked to asparagine 29. Residues 38–63 (VSIPDGLFLSLGLVSLVENVLVVAAI) traverse the membrane as a helical segment. The Cytoplasmic segment spans residues 64–72 (AKNRNLHSP). Residues 73–93 (MYYFICCLAMSDLLVSVSNVL) form a helical membrane-spanning segment. At 94–118 (ETAVMLLLEAGALAAQAAVVQQLDN) the chain is on the extracellular side. Residues 119-140 (VIDVLICGSMVSSLCFLGAIAV) form a helical membrane-spanning segment. The Cytoplasmic segment spans residues 141–163 (DRYISIFYALRYHSVVTLPRAWR). A helical transmembrane segment spans residues 164 to 183 (IIAAIWVASILTSLLFITYY). Topologically, residues 184-191 (NHTVVLLC) are extracellular. Residues 192–211 (LVGFFIAMLALMAVLYVHML) form a helical membrane-spanning segment. Residues 212-240 (ARACQHARGIARLQKRQRPIHQGFGLKGA) lie on the Cytoplasmic side of the membrane. A helical transmembrane segment spans residues 241–266 (ATLTILLGVFFLCWGPFFLHLSLIVL). Residues 267-279 (CPQHPTCGCIFKN) lie on the Extracellular side of the membrane. Residues 280–300 (FNLFLALIICNAIVDPLIYAF) traverse the membrane as a helical segment. The Cytoplasmic segment spans residues 301–317 (RSQELRKTLQEVLQCSW). Cysteine 315 carries the S-palmitoyl cysteine lipid modification.

The protein belongs to the G-protein coupled receptor 1 family. Interacts with MGRN1, but does not undergo MGRN1-mediated ubiquitination; this interaction competes with GNAS-binding and thus inhibits agonist-induced cAMP production. Interacts with OPN3; the interaction results in a decrease in MC1R-mediated cAMP signaling and ultimately a decrease in melanin production in melanocytes.

The protein resides in the cell membrane. Its function is as follows. Receptor for MSH (alpha, beta and gamma) and ACTH. The activity of this receptor is mediated by G proteins which activate adenylate cyclase. Mediates melanogenesis, the production of eumelanin (black/brown) and phaeomelanin (red/yellow), via regulation of cAMP signaling in melanocytes. In Dama dama (Fallow deer), this protein is Melanocyte-stimulating hormone receptor (MC1R).